We begin with the raw amino-acid sequence, 473 residues long: Photosystem II CP43 reaction center protein (473 aa).

Residues 1–14 (MKILYSLRRFYHVE) constitute a propeptide that is removed on maturation. T15 carries the post-translational modification N-acetylthreonine. The residue at position 15 (T15) is a Phosphothreonine. 5 helical membrane passes run 69-93 (LFEV…PHLA), 134-155 (LLGP…KDRN), 178-200 (KALY…RKIT), 255-275 (KPFA…LSYS), and 291-312 (WFNN…ASQA). E367 contributes to the [CaMn4O5] cluster binding site. Residues 447–471 (RARAAAAGFEKGIDRDLEPVLYMTP) traverse the membrane as a helical segment.

This sequence belongs to the PsbB/PsbC family. PsbC subfamily. In terms of assembly, PSII is composed of 1 copy each of membrane proteins PsbA, PsbB, PsbC, PsbD, PsbE, PsbF, PsbH, PsbI, PsbJ, PsbK, PsbL, PsbM, PsbT, PsbX, PsbY, PsbZ, Psb30/Ycf12, at least 3 peripheral proteins of the oxygen-evolving complex and a large number of cofactors. It forms dimeric complexes. The cofactor is Binds multiple chlorophylls and provides some of the ligands for the Ca-4Mn-5O cluster of the oxygen-evolving complex. It may also provide a ligand for a Cl- that is required for oxygen evolution. PSII binds additional chlorophylls, carotenoids and specific lipids..

The protein resides in the plastid. The protein localises to the chloroplast thylakoid membrane. Its function is as follows. One of the components of the core complex of photosystem II (PSII). It binds chlorophyll and helps catalyze the primary light-induced photochemical processes of PSII. PSII is a light-driven water:plastoquinone oxidoreductase, using light energy to abstract electrons from H(2)O, generating O(2) and a proton gradient subsequently used for ATP formation. This Oryza nivara (Indian wild rice) protein is Photosystem II CP43 reaction center protein.